A 341-amino-acid chain; its full sequence is Ferredoxin--NADP reductase (341 aa).

The FAD site is built by Asp38, Gln46, Tyr51, Val91, Phe125, Asp292, and Thr333.

It belongs to the ferredoxin--NADP reductase type 2 family. In terms of assembly, homodimer. The cofactor is FAD.

The catalysed reaction is 2 reduced [2Fe-2S]-[ferredoxin] + NADP(+) + H(+) = 2 oxidized [2Fe-2S]-[ferredoxin] + NADPH. The polypeptide is Ferredoxin--NADP reductase (Gluconacetobacter diazotrophicus (strain ATCC 49037 / DSM 5601 / CCUG 37298 / CIP 103539 / LMG 7603 / PAl5)).